Here is a 110-residue protein sequence, read N- to C-terminus: UPF0145 protein Blon_0093/BLIJ_0092 (110 aa).

It belongs to the UPF0145 family.

The protein is UPF0145 protein Blon_0093/BLIJ_0092 of Bifidobacterium longum subsp. infantis (strain ATCC 15697 / DSM 20088 / JCM 1222 / NCTC 11817 / S12).